The following is a 326-amino-acid chain: Beta-ketoacyl-[acyl-carrier-protein] synthase III (326 aa).

Catalysis depends on residues cysteine 120 and histidine 253. The segment at 254–258 (QANIR) is ACP-binding. Residue asparagine 283 is part of the active site.

It belongs to the thiolase-like superfamily. FabH family. In terms of assembly, homodimer.

The protein resides in the cytoplasm. The catalysed reaction is malonyl-[ACP] + acetyl-CoA + H(+) = 3-oxobutanoyl-[ACP] + CO2 + CoA. It functions in the pathway lipid metabolism; fatty acid biosynthesis. Functionally, catalyzes the condensation reaction of fatty acid synthesis by the addition to an acyl acceptor of two carbons from malonyl-ACP. Catalyzes the first condensation reaction which initiates fatty acid synthesis and may therefore play a role in governing the total rate of fatty acid production. Possesses both acetoacetyl-ACP synthase and acetyl transacylase activities. Its substrate specificity determines the biosynthesis of branched-chain and/or straight-chain of fatty acids. The polypeptide is Beta-ketoacyl-[acyl-carrier-protein] synthase III (Ralstonia pickettii (strain 12J)).